A 361-amino-acid chain; its full sequence is L-threonine 3-dehydrogenase (361 aa).

Cysteine 38 contacts Zn(2+). Residues threonine 40 and histidine 43 each act as charge relay system in the active site. Zn(2+) is bound by residues histidine 63, glutamate 64, cysteine 93, cysteine 96, cysteine 99, and cysteine 107. NAD(+) is bound by residues isoleucine 175, aspartate 195, arginine 200, 262-264 (LGI), and 286-287 (IY).

The protein belongs to the zinc-containing alcohol dehydrogenase family. In terms of assembly, homotetramer. Zn(2+) serves as cofactor.

It localises to the cytoplasm. It catalyses the reaction L-threonine + NAD(+) = (2S)-2-amino-3-oxobutanoate + NADH + H(+). It participates in amino-acid degradation; L-threonine degradation via oxydo-reductase pathway; glycine from L-threonine: step 1/2. Its function is as follows. Catalyzes the NAD(+)-dependent oxidation of L-threonine to 2-amino-3-ketobutyrate. The chain is L-threonine 3-dehydrogenase from Pectobacterium atrosepticum (strain SCRI 1043 / ATCC BAA-672) (Erwinia carotovora subsp. atroseptica).